The following is a 206-amino-acid chain: Ribonuclease HII (206 aa).

Residues 22–206 enclose the RNase H type-2 domain; the sequence is RFICGVDEAG…ISFLKNILSL (185 aa). Residues D28, E29, and D120 each coordinate a divalent metal cation.

It belongs to the RNase HII family. The cofactor is Mn(2+). Requires Mg(2+) as cofactor.

The protein localises to the cytoplasm. It catalyses the reaction Endonucleolytic cleavage to 5'-phosphomonoester.. Its function is as follows. Endonuclease that specifically degrades the RNA of RNA-DNA hybrids. This Caldicellulosiruptor bescii (strain ATCC BAA-1888 / DSM 6725 / KCTC 15123 / Z-1320) (Anaerocellum thermophilum) protein is Ribonuclease HII.